Here is a 407-residue protein sequence, read N- to C-terminus: uncharacterized protein (407 aa).

12 consecutive transmembrane segments (helical) span residues 22–42 (IVSV…PLAV), 51–71 (LGFS…ATLA), 101–121 (ALLL…VLLV), 126–146 (VLGI…IGRV), 154–174 (VISW…PVGV), 179–199 (ALIP…GYYL), 227–247 (GLGL…ITLY), 258–278 (LSLT…ANTI), 286–306 (VAIV…LAPV), 309–329 (VALV…PALG), 347–367 (AYSV…GYVA), and 369–389 (AFGY…GVAL).

It belongs to the major facilitator superfamily. YhhS family.

The protein localises to the cell inner membrane. This is an uncharacterized protein from Burkholderia pseudomallei (strain 1106a).